The chain runs to 43 residues: Cytochrome b559 subunit beta (43 aa).

A helical membrane pass occupies residues 18 to 34 (WLAVHTLAIPTVFFLGA). Residue H22 participates in heme binding.

This sequence belongs to the PsbE/PsbF family. Heterodimer of an alpha subunit and a beta subunit. PSII is composed of 1 copy each of membrane proteins PsbA, PsbB, PsbC, PsbD, PsbE, PsbF, PsbH, PsbI, PsbJ, PsbK, PsbL, PsbM, PsbT, PsbX, PsbY, PsbZ, Psb30/Ycf12, peripheral proteins PsbO, CyanoQ (PsbQ), PsbU, PsbV and a large number of cofactors. It forms dimeric complexes. It depends on heme b as a cofactor.

It is found in the cellular thylakoid membrane. In terms of biological role, this b-type cytochrome is tightly associated with the reaction center of photosystem II (PSII). PSII is a light-driven water:plastoquinone oxidoreductase that uses light energy to abstract electrons from H(2)O, generating O(2) and a proton gradient subsequently used for ATP formation. It consists of a core antenna complex that captures photons, and an electron transfer chain that converts photonic excitation into a charge separation. The sequence is that of Cytochrome b559 subunit beta from Synechococcus sp. (strain JA-2-3B'a(2-13)) (Cyanobacteria bacterium Yellowstone B-Prime).